Consider the following 359-residue polypeptide: Phosphoserine aminotransferase (359 aa).

The L-glutamate site is built by serine 9 and arginine 42. Residues 76-77 (AS), tryptophan 102, threonine 152, aspartate 171, and glutamine 194 each bind pyridoxal 5'-phosphate. Lysine 195 is subject to N6-(pyridoxal phosphate)lysine. 236–237 (NT) lines the pyridoxal 5'-phosphate pocket.

This sequence belongs to the class-V pyridoxal-phosphate-dependent aminotransferase family. SerC subfamily. In terms of assembly, homodimer. Requires pyridoxal 5'-phosphate as cofactor.

It localises to the cytoplasm. It catalyses the reaction O-phospho-L-serine + 2-oxoglutarate = 3-phosphooxypyruvate + L-glutamate. It carries out the reaction 4-(phosphooxy)-L-threonine + 2-oxoglutarate = (R)-3-hydroxy-2-oxo-4-phosphooxybutanoate + L-glutamate. It participates in amino-acid biosynthesis; L-serine biosynthesis; L-serine from 3-phospho-D-glycerate: step 2/3. It functions in the pathway cofactor biosynthesis; pyridoxine 5'-phosphate biosynthesis; pyridoxine 5'-phosphate from D-erythrose 4-phosphate: step 3/5. Catalyzes the reversible conversion of 3-phosphohydroxypyruvate to phosphoserine and of 3-hydroxy-2-oxo-4-phosphonooxybutanoate to phosphohydroxythreonine. The chain is Phosphoserine aminotransferase from Marinomonas sp. (strain MWYL1).